Here is a 208-residue protein sequence, read N- to C-terminus: Protein JLP2 (208 aa).

The span at 185 to 194 (AKKNQKKKNK) shows a compositional bias: basic residues. Residues 185-208 (AKKNQKKKNKQSKDEVTDDMQLEV) are disordered.

It belongs to the CCDC25 family.

The protein resides in the cytoplasm. This is Protein JLP2 (JLP2) from Saccharomyces cerevisiae (strain ATCC 204508 / S288c) (Baker's yeast).